A 327-amino-acid chain; its full sequence is GMP reductase (327 aa).

Cys-176 acts as the Thioimidate intermediate in catalysis. 205 to 228 contacts NADP(+); sequence IIADGGIRTHGDIAKSIRFGASMV.

The protein belongs to the IMPDH/GMPR family. GuaC type 2 subfamily.

It carries out the reaction IMP + NH4(+) + NADP(+) = GMP + NADPH + 2 H(+). In terms of biological role, catalyzes the irreversible NADPH-dependent deamination of GMP to IMP. It functions in the conversion of nucleobase, nucleoside and nucleotide derivatives of G to A nucleotides, and in maintaining the intracellular balance of A and G nucleotides. This is GMP reductase from Streptococcus suis (strain 98HAH33).